We begin with the raw amino-acid sequence, 250 residues long: Protein lin-28 homolog B (250 aa).

Positions 1–26 are disordered; that stretch reads MAEGGASKGGGEEPGKLPEPAEEESQ. Positions 29–102 constitute a CSD domain; that stretch reads RGTGHCKWFN…GLESIRVTGP (74 aa). Phosphoserine is present on residues S54, S96, S105, and S110. Positions 98–126 are disordered; it reads RVTGPGGSPCLGSERRPKGKTLQKRKPKG. Positions 112–125 match the Bipartite nuclear localization signal motif; sequence RRPKGKTLQKRKPK. A compositionally biased stretch (basic residues) spans 114 to 125; it reads PKGKTLQKRKPK. CCHC-type zinc fingers lie at residues 127–144 and 149–166; these read DRCY…ECSL and KKCH…NCPH. Positions 129, 132, 137, 142, 151, 154, 159, and 164 each coordinate Zn(2+). Residues 169-250 are disordered; the sequence is VAQPPASSQG…GPSVQKRKKT (82 aa). Residues 173-191 show a composition bias toward polar residues; sequence PASSQGRQEAESQPCTSTL. S203 is subject to Phosphoserine. Over residues 210–219 the composition is skewed to basic and acidic residues; the sequence is ARAEISERSG. The span at 220–231 shows a compositional bias: polar residues; the sequence is RSPQEASSTKSS. The short motif at 239 to 250 is the Nucleolar localization signal element; that stretch reads KKGPSVQKRKKT.

This sequence belongs to the lin-28 family. As to expression, expressed at high levels in the placenta and, at mucher lower, in testis and fetal liver. Isoform 1 is only detected in placenta and in moderately and poorly differentiated hepatocellular carcinoma cells (at protein level). Isoform 2 is detected in fetal liver, non-tumor liver tissues, as well as well-differentiated tumor tissues (at protein level). Tends to be up-regulated in triple-negative (ER-,PR-,HER2-) breast tumors, as well as in liver, ovarian, and thyroid carcinomas.

Its subcellular location is the nucleus. The protein localises to the nucleolus. The protein resides in the cytoplasm. Suppressor of microRNA (miRNA) biogenesis, including that of let-7 and possibly of miR107, miR-143 and miR-200c. Binds primary let-7 transcripts (pri-let-7), including pri-let-7g and pri-let-7a-1, and sequester them in the nucleolus, away from the microprocessor complex, hence preventing their processing into mature miRNA. Does not act on pri-miR21. The repression of let-7 expression is required for normal development and contributes to maintain the pluripotent state of embryonic stem cells by preventing let-7-mediated differentiation. When overexpressed, recruits ZCCHC11/TUT4 uridylyltransferase to pre-let-7 transcripts, leading to their terminal uridylation and degradation. This activity might not be relevant in vivo, as LIN28B-mediated inhibition of let-7 miRNA maturation appears to be ZCCHC11-independent. Interaction with target pre-miRNAs occurs via an 5'-GGAG-3' motif in the pre-miRNA terminal loop. Mediates MYC-induced let-7 repression. When overexpressed, isoform 1 stimulates growth of the breast adenocarcinoma cell line MCF-7. Isoform 2 has no effect on cell growth. The sequence is that of Protein lin-28 homolog B (LIN28B) from Homo sapiens (Human).